Consider the following 135-residue polypeptide: Protein PilG (135 aa).

The Response regulatory domain occupies 9–125 (KVMVIDDSKT…ELLGAIKAHV (117 aa)). D58 bears the 4-aspartylphosphate mark.

Post-translationally, phosphorylated.

In terms of biological role, plays an essential role in both cAMP-dependent and independent regulation of twitching motility. Regulates the cAMP-independent coordination of type IV pilus (T4P) biogenesis and retraction that plays a role in surface and host cell adhesion, colonization, biofilm maturation, virulence, and twitching. In addition, phosphorylated PilG is necessary for cAMP production via regulation of the adenylate cyclase CyaB. Acts therefore as a response regulator of the chemosensory system/Chp system. This is Protein PilG (pilG) from Pseudomonas aeruginosa (strain ATCC 15692 / DSM 22644 / CIP 104116 / JCM 14847 / LMG 12228 / 1C / PRS 101 / PAO1).